Reading from the N-terminus, the 409-residue chain is Elongation factor Tu, chloroplastic (409 aa).

The region spanning 10 to 214 (KPHVNIGTIG…AVDTYIPTPE (205 aa)) is the tr-type G domain. The tract at residues 19 to 26 (GHVDHGKT) is G1. Position 19-26 (19-26 (GHVDHGKT)) interacts with GTP. T26 is a binding site for Mg(2+). The G2 stretch occupies residues 60–64 (GITIN). The interval 81 to 84 (DCPG) is G3. Residues 81–85 (DCPGH) and 136–139 (NKED) each bind GTP. Residues 136–139 (NKED) form a G4 region. The interval 174 to 176 (SAL) is G5.

This sequence belongs to the TRAFAC class translation factor GTPase superfamily. Classic translation factor GTPase family. EF-Tu/EF-1A subfamily.

Its subcellular location is the plastid. The protein resides in the chloroplast. It catalyses the reaction GTP + H2O = GDP + phosphate + H(+). Its function is as follows. GTP hydrolase that promotes the GTP-dependent binding of aminoacyl-tRNA to the A-site of ribosomes during protein biosynthesis. The protein is Elongation factor Tu, chloroplastic (tufA) of Porphyra purpurea (Red seaweed).